The chain runs to 104 residues: UPF0145 protein GTNG_1265 (104 aa).

Belongs to the UPF0145 family.

The chain is UPF0145 protein GTNG_1265 from Geobacillus thermodenitrificans (strain NG80-2).